Reading from the N-terminus, the 362-residue chain is Aminomethyltransferase (362 aa).

Belongs to the GcvT family. In terms of assembly, the glycine cleavage system is composed of four proteins: P, T, L and H.

It catalyses the reaction N(6)-[(R)-S(8)-aminomethyldihydrolipoyl]-L-lysyl-[protein] + (6S)-5,6,7,8-tetrahydrofolate = N(6)-[(R)-dihydrolipoyl]-L-lysyl-[protein] + (6R)-5,10-methylene-5,6,7,8-tetrahydrofolate + NH4(+). Its function is as follows. The glycine cleavage system catalyzes the degradation of glycine. The chain is Aminomethyltransferase from Listeria innocua serovar 6a (strain ATCC BAA-680 / CLIP 11262).